Reading from the N-terminus, the 228-residue chain is CMRF-35-like molecule 4 (228 aa).

Positions methionine 1–proline 24 are cleaved as a signal peptide. One can recognise an Ig-like V-type domain in the interval leucine 25–tyrosine 126. The Extracellular segment spans residues leucine 25–tyrosine 187. Cysteine 43 and cysteine 110 form a disulfide bridge. Asparagine 90 is a glycosylation site (N-linked (GlcNAc...) asparagine). The disordered stretch occupies residues proline 139–alanine 174. Positions serine 154–aspartate 170 are enriched in polar residues. Residues phenylalanine 188 to tryptophan 208 traverse the membrane as a helical segment. Residues valine 209 to glutamine 228 are Cytoplasmic-facing.

It belongs to the CD300 family. In terms of assembly, interacts with TYROBP, HCST and FcR gamma. As to expression, present on the surface of mast cells, dendritic cells, peritoneal macrophages and a subset of B-cells (at protein level).

The protein resides in the cell membrane. Functionally, acts as an activating receptor in mast cells and macrophages. The chain is CMRF-35-like molecule 4 from Mus musculus (Mouse).